The sequence spans 109 residues: Putative polyketide cyclase (109 aa).

The protein to polyketide cyclases.

Involved in developmentally regulated synthesis of a compound biosynthetically related to polyketide antibiotics which is essential for spore color in Streptomyces halstedii. This Streptomyces halstedii protein is Putative polyketide cyclase (sch4).